A 110-amino-acid polypeptide reads, in one-letter code: UPF0367 protein sync_2587 (110 aa).

The protein belongs to the UPF0367 family.

This is UPF0367 protein sync_2587 from Synechococcus sp. (strain CC9311).